The following is a 155-amino-acid chain: MTDEGLTEGLLISPIRNGTVIDHIKGGEGLNVLRILGLTGTCTVSLSVATNVTSRQMGRKDIVKIENRELLKEEVDRIALIAPQSSINIIREFRVFDKKGVDIPNQICGVIRCPNPGCITNTNEPVTSRFTIQQSGLRCHYCDWLITKDIASHII.

Zn(2+) is bound by residues Cys-113, Cys-118, Cys-139, and Cys-142.

The protein belongs to the PyrI family. As to quaternary structure, contains catalytic and regulatory chains. Zn(2+) is required as a cofactor.

Functionally, involved in allosteric regulation of aspartate carbamoyltransferase. The sequence is that of Aspartate carbamoyltransferase regulatory chain from Methanosphaerula palustris (strain ATCC BAA-1556 / DSM 19958 / E1-9c).